Consider the following 493-residue polypeptide: UDP-N-acetylmuramoylalanine--D-glutamate ligase (493 aa).

Residue 126-132 (GTNGKTT) participates in ATP binding.

Belongs to the MurCDEF family.

The protein resides in the cytoplasm. It carries out the reaction UDP-N-acetyl-alpha-D-muramoyl-L-alanine + D-glutamate + ATP = UDP-N-acetyl-alpha-D-muramoyl-L-alanyl-D-glutamate + ADP + phosphate + H(+). It functions in the pathway cell wall biogenesis; peptidoglycan biosynthesis. Functionally, cell wall formation. Catalyzes the addition of glutamate to the nucleotide precursor UDP-N-acetylmuramoyl-L-alanine (UMA). In Mycolicibacterium smegmatis (strain ATCC 700084 / mc(2)155) (Mycobacterium smegmatis), this protein is UDP-N-acetylmuramoylalanine--D-glutamate ligase.